We begin with the raw amino-acid sequence, 391 residues long: Large ribosomal subunit protein uL3 (391 aa).

Residues 1–10 (MSHRKFEAPR) show a composition bias toward basic and acidic residues. Residues 1–41 (MSHRKFEAPRHGSLGFRPRRRTRHHRGRCRSFPKDDPSKKP) form a disordered region. Over residues 17–31 (RPRRRTRHHRGRCRS) the composition is skewed to basic residues.

The protein belongs to the universal ribosomal protein uL3 family.

It is found in the cytoplasm. The L3 protein is a component of the large subunit of cytoplasmic ribosomes. The polypeptide is Large ribosomal subunit protein uL3 (RPL3) (Tetrahymena thermophila).